The chain runs to 195 residues: ATP-dependent Clp protease proteolytic subunit (195 aa).

The active-site Nucleophile is serine 97. The active site involves histidine 122.

Belongs to the peptidase S14 family. In terms of assembly, fourteen ClpP subunits assemble into 2 heptameric rings which stack back to back to give a disk-like structure with a central cavity, resembling the structure of eukaryotic proteasomes.

The protein resides in the cytoplasm. It carries out the reaction Hydrolysis of proteins to small peptides in the presence of ATP and magnesium. alpha-casein is the usual test substrate. In the absence of ATP, only oligopeptides shorter than five residues are hydrolyzed (such as succinyl-Leu-Tyr-|-NHMec, and Leu-Tyr-Leu-|-Tyr-Trp, in which cleavage of the -Tyr-|-Leu- and -Tyr-|-Trp bonds also occurs).. Cleaves peptides in various proteins in a process that requires ATP hydrolysis. Has a chymotrypsin-like activity. Plays a major role in the degradation of misfolded proteins. This chain is ATP-dependent Clp protease proteolytic subunit, found in Lactobacillus gasseri (strain ATCC 33323 / DSM 20243 / BCRC 14619 / CIP 102991 / JCM 1131 / KCTC 3163 / NCIMB 11718 / NCTC 13722 / AM63).